We begin with the raw amino-acid sequence, 206 residues long: Transcription factor MYB57 (206 aa).

Residues 1–11 (METTMKKKGRV) are compositionally biased toward basic residues. The tract at residues 1–20 (METTMKKKGRVKATITSQKE) is disordered. HTH myb-type domains are found at residues 22 to 74 (EGTV…LNYL) and 75 to 129 (RPDV…QRHM). DNA-binding regions (H-T-H motif) lie at residues 50–74 (WNSV…LNYL) and 102–125 (WSKI…RTKI). Residues 138–162 (NHQHHCSGNSQSSGMTTQGSSGKAI) form a disordered region. A compositionally biased stretch (low complexity) spans 144–159 (SGNSQSSGMTTQGSSG).

As to expression, expressed specifically in flowers.

The protein localises to the nucleus. Its function is as follows. Transcription factor acting redundantly with MYB21 and MYB24 to control stamen filament elongation in the late developed flowers. Repressed at the transcript levels by DELLA proteins. This Arabidopsis thaliana (Mouse-ear cress) protein is Transcription factor MYB57 (MYB57).